We begin with the raw amino-acid sequence, 207 residues long: Large ribosomal subunit protein uL4 (207 aa).

Residues 44–78 (MRQGTHKTKNRAEVSGGGRKPWRQKGTGRARQGSI) form a disordered region.

The protein belongs to the universal ribosomal protein uL4 family. Part of the 50S ribosomal subunit.

Its function is as follows. One of the primary rRNA binding proteins, this protein initially binds near the 5'-end of the 23S rRNA. It is important during the early stages of 50S assembly. It makes multiple contacts with different domains of the 23S rRNA in the assembled 50S subunit and ribosome. This protein when expressed in E.coli represses the endogenous S10 operon; this may not occur in B.stearothermophilus however. In terms of biological role, forms part of the polypeptide exit tunnel. The chain is Large ribosomal subunit protein uL4 (rplD) from Geobacillus stearothermophilus (Bacillus stearothermophilus).